A 343-amino-acid polypeptide reads, in one-letter code: D-alanine--D-alanine ligase (343 aa).

Residues 129-335 (KYVLENFGVK…YGELISEIIE (207 aa)) form the ATP-grasp domain. 162–217 (ENKLGYDVFIKPSNSGSSVGISKAHNREELEAGLEEALKFDRKVLVEVALNAREIE) is a binding site for ATP. The Mg(2+) site is built by aspartate 288, glutamate 302, and asparagine 304.

The protein belongs to the D-alanine--D-alanine ligase family. Mg(2+) serves as cofactor. Requires Mn(2+) as cofactor.

The protein localises to the cytoplasm. The enzyme catalyses 2 D-alanine + ATP = D-alanyl-D-alanine + ADP + phosphate + H(+). The protein operates within cell wall biogenesis; peptidoglycan biosynthesis. Its function is as follows. Cell wall formation. In Clostridium novyi (strain NT), this protein is D-alanine--D-alanine ligase.